The sequence spans 293 residues: Acetyl-coenzyme A carboxylase carboxyl transferase subunit beta (293 aa).

The 265-residue stretch at leucine 29–alanine 293 folds into the CoA carboxyltransferase N-terminal domain. The Zn(2+) site is built by cysteine 33, cysteine 36, cysteine 52, and cysteine 55. The C4-type zinc-finger motif lies at cysteine 33 to cysteine 55.

It belongs to the AccD/PCCB family. Acetyl-CoA carboxylase is a heterohexamer composed of biotin carboxyl carrier protein (AccB), biotin carboxylase (AccC) and two subunits each of ACCase subunit alpha (AccA) and ACCase subunit beta (AccD). It depends on Zn(2+) as a cofactor.

Its subcellular location is the cytoplasm. The enzyme catalyses N(6)-carboxybiotinyl-L-lysyl-[protein] + acetyl-CoA = N(6)-biotinyl-L-lysyl-[protein] + malonyl-CoA. The protein operates within lipid metabolism; malonyl-CoA biosynthesis; malonyl-CoA from acetyl-CoA: step 1/1. In terms of biological role, component of the acetyl coenzyme A carboxylase (ACC) complex. Biotin carboxylase (BC) catalyzes the carboxylation of biotin on its carrier protein (BCCP) and then the CO(2) group is transferred by the transcarboxylase to acetyl-CoA to form malonyl-CoA. The chain is Acetyl-coenzyme A carboxylase carboxyl transferase subunit beta from Synechococcus sp. (strain CC9902).